Reading from the N-terminus, the 197-residue chain is uncharacterized protein (197 aa).

Helical transmembrane passes span 12–41 (LCIF…WVLF), 78–100 (LIQG…TALS), 120–142 (VGVF…FGCV), and 162–184 (IRFA…IFRS).

The protein resides in the cell membrane. This is an uncharacterized protein from Treponema pallidum (strain Nichols).